Consider the following 334-residue polypeptide: Catabolite repressor/activator (334 aa).

The HTH lacI-type domain occupies 1–58; sequence MKLDEIARLAGVSRTTASYVINGKAKQYRVSDKTVEKVMAVVREHNYHPNAVAAGLRA. A DNA-binding region (H-T-H motif) is located at residues 3–22; the sequence is LDEIARLAGVSRTTASYVIN.

As to quaternary structure, homotetramer.

Functionally, global transcriptional regulator, which plays an important role in the regulation of carbon metabolism. This chain is Catabolite repressor/activator (cra), found in Escherichia coli O157:H7.